We begin with the raw amino-acid sequence, 437 residues long: Trigger factor (437 aa).

The 86-residue stretch at 163–248 (SDRVIIDFEG…LNNVSEATLP (86 aa)) folds into the PPIase FKBP-type domain.

The protein belongs to the FKBP-type PPIase family. Tig subfamily.

The protein localises to the cytoplasm. The catalysed reaction is [protein]-peptidylproline (omega=180) = [protein]-peptidylproline (omega=0). Functionally, involved in protein export. Acts as a chaperone by maintaining the newly synthesized protein in an open conformation. Functions as a peptidyl-prolyl cis-trans isomerase. This is Trigger factor from Neisseria meningitidis serogroup C / serotype 2a (strain ATCC 700532 / DSM 15464 / FAM18).